We begin with the raw amino-acid sequence, 252 residues long: Trans-aconitate 2-methyltransferase (252 aa).

The protein belongs to the methyltransferase superfamily. Tam family.

It localises to the cytoplasm. It carries out the reaction trans-aconitate + S-adenosyl-L-methionine = (E)-3-(methoxycarbonyl)pent-2-enedioate + S-adenosyl-L-homocysteine. In terms of biological role, catalyzes the S-adenosylmethionine monomethyl esterification of trans-aconitate. The chain is Trans-aconitate 2-methyltransferase from Escherichia coli O6:H1 (strain CFT073 / ATCC 700928 / UPEC).